A 317-amino-acid polypeptide reads, in one-letter code: Ribosomal protein L11 methyltransferase (317 aa).

The S-adenosyl-L-methionine site is built by Thr158, Gly179, Asp201, and Asn244.

This sequence belongs to the methyltransferase superfamily. PrmA family.

The protein localises to the cytoplasm. The enzyme catalyses L-lysyl-[protein] + 3 S-adenosyl-L-methionine = N(6),N(6),N(6)-trimethyl-L-lysyl-[protein] + 3 S-adenosyl-L-homocysteine + 3 H(+). Its function is as follows. Methylates ribosomal protein L11. This is Ribosomal protein L11 methyltransferase from Streptococcus pyogenes serotype M4 (strain MGAS10750).